Reading from the N-terminus, the 468-residue chain is MAKTLYEKVFDAHVVYEGKNELPILYIDRHLIHEVTSPQAFSGLKMAKRRMARADLTLATIDHDVSTKSIDLNACSDMAKEQITTLMQNTKEFGVRLLGLGDKNQGIVHIVGPELGFTLPGVTLVCGDSHTATHGAFGALAFGIGTSEVEHVMATQTLKQAKLKTMKIECKGQFQKGVYAKDLILYLIAQYGTAKGTGYAIEFCGELIRKLSMEARMTLCNMAIEFGAKVGMIAPDEITFEYIKGKEFAPKGEEFQKYCEYWKSLRSDEGAKYDESITLDVSKIKPQISYGTNPSQVIGIDEKIPKISDFKNQSEQKSLLDALSYVNLEQDQVIEGVKIDIVFIGSCTNGRLEDLKIAADILKGHKIHKNVKALIVPGSMQVRKEAENLGLDKIFIEAGCEWRYAGCSMCLGMNDDKANSGQRVASTSNRNFVGRQGKGSITHLMSPASAAACAIEGVICDNRKYLGV.

Residues Cys347, Cys407, and Cys410 each coordinate [4Fe-4S] cluster.

This sequence belongs to the aconitase/IPM isomerase family. LeuC type 1 subfamily. As to quaternary structure, heterodimer of LeuC and LeuD. The cofactor is [4Fe-4S] cluster.

It carries out the reaction (2R,3S)-3-isopropylmalate = (2S)-2-isopropylmalate. Its pathway is amino-acid biosynthesis; L-leucine biosynthesis; L-leucine from 3-methyl-2-oxobutanoate: step 2/4. Its function is as follows. Catalyzes the isomerization between 2-isopropylmalate and 3-isopropylmalate, via the formation of 2-isopropylmaleate. The chain is 3-isopropylmalate dehydratase large subunit from Campylobacter jejuni subsp. jejuni serotype O:6 (strain 81116 / NCTC 11828).